A 225-amino-acid polypeptide reads, in one-letter code: Uridylate kinase (225 aa).

Residue 9–10 coordinates ATP; the sequence is GS. Gly46 serves as a coordination point for UMP. ATP contacts are provided by Gly47 and Arg51. Residues Asp67 and 115 to 121 contribute to the UMP site; that span reads THPAHTT. Residues Thr141, Asn142, Tyr147, and Asp150 each contribute to the ATP site.

Belongs to the UMP kinase family. Homohexamer.

The protein resides in the cytoplasm. The catalysed reaction is UMP + ATP = UDP + ADP. The protein operates within pyrimidine metabolism; CTP biosynthesis via de novo pathway; UDP from UMP (UMPK route): step 1/1. With respect to regulation, inhibited by UTP. Its function is as follows. Catalyzes the reversible phosphorylation of UMP to UDP. The polypeptide is Uridylate kinase (Methanococcus maripaludis (strain C6 / ATCC BAA-1332)).